The primary structure comprises 732 residues: Polyadenylate-binding protein, cytoplasmic and nuclear (732 aa).

Residues 1 to 19 (MSAETSTTPAPAENTNGTP) show a composition bias toward polar residues. Residues 1–26 (MSAETSTTPAPAENTNGTPDNAPAPE) form a disordered region. RRM domains are found at residues 42–120 (ASLY…WSQR), 130–207 (GNVF…HHIS), 223–300 (TNIY…RAQK), and 326–454 (VNLY…LAQR). Disordered regions lie at residues 357–413 (VMRD…KKPL) and 706–732 (MKNK…ENKA). Residues 371-412 (SETKESANKENEKAAEGEKEPAAEEKEKEEKKEAEQKPEKKP) show a composition bias toward basic and acidic residues. The PABC domain maps to 630-707 (VGVLTAQALS…ALSVYDEYMK (78 aa)).

The protein belongs to the polyadenylate-binding protein type-1 family.

The protein localises to the cytoplasm. Its subcellular location is the nucleus. Binds the poly(A) tail of mRNA. Appears to be an important mediator of the multiple roles of the poly(A) tail in mRNA biogenesis, stability and translation. In the nucleus, involved in both mRNA cleavage and polyadenylation. Is also required for efficient mRNA export to the cytoplasm. Acts in concert with a poly(A)-specific nuclease (PAN) to affect poly(A) tail shortening, which may occur concomitantly with either nucleocytoplasmic mRNA transport or translational initiation. In the cytoplasm, stimulates translation initiation and regulates mRNA decay through translation termination-coupled poly(A) shortening, probably mediated by PAN. This Emericella nidulans (strain FGSC A4 / ATCC 38163 / CBS 112.46 / NRRL 194 / M139) (Aspergillus nidulans) protein is Polyadenylate-binding protein, cytoplasmic and nuclear (pab1).